A 179-amino-acid chain; its full sequence is Large ribosomal subunit protein uL5 (179 aa).

The protein belongs to the universal ribosomal protein uL5 family. Part of the 50S ribosomal subunit; part of the 5S rRNA/L5/L18/L25 subcomplex. Contacts the 5S rRNA and the P site tRNA. Forms a bridge to the 30S subunit in the 70S ribosome.

In terms of biological role, this is one of the proteins that bind and probably mediate the attachment of the 5S RNA into the large ribosomal subunit, where it forms part of the central protuberance. In the 70S ribosome it contacts protein S13 of the 30S subunit (bridge B1b), connecting the 2 subunits; this bridge is implicated in subunit movement. Contacts the P site tRNA; the 5S rRNA and some of its associated proteins might help stabilize positioning of ribosome-bound tRNAs. This chain is Large ribosomal subunit protein uL5, found in Dehalococcoides mccartyi (strain ATCC BAA-2100 / JCM 16839 / KCTC 5957 / BAV1).